The primary structure comprises 266 residues: MIAMNTPDFQRMKKDNKKISMVTCYDYWSACIISQSNVDCILVGDSLAMVMYGHSTTLPATVEIMAQHIQAVSRGAPNKFIIGDMPFCSYRKDLTTSMNAVERLMQAGAQAIKLEGADAHNLKFIHHVVKSGIPVIGHLGLTPQSIYTLGGFKVQGKEPSAAKKLMADAKALAETGCFAVVLECVPSELAELITNSISIPTIGIGAGPATSGQVLVLQDLLGTNNQFQPKYLKKFLNGFELIKKALDDFDQEVKTSTYPHLETHCY.

Mg(2+) is bound by residues Asp-45 and Asp-84. 3-methyl-2-oxobutanoate contacts are provided by residues 45–46, Asp-84, and Lys-113; that span reads DS. Glu-115 is a Mg(2+) binding site. Glu-183 (proton acceptor) is an active-site residue.

The protein belongs to the PanB family. As to quaternary structure, homodecamer; pentamer of dimers. The cofactor is Mg(2+).

The protein localises to the cytoplasm. It catalyses the reaction 3-methyl-2-oxobutanoate + (6R)-5,10-methylene-5,6,7,8-tetrahydrofolate + H2O = 2-dehydropantoate + (6S)-5,6,7,8-tetrahydrofolate. Its pathway is cofactor biosynthesis; (R)-pantothenate biosynthesis; (R)-pantoate from 3-methyl-2-oxobutanoate: step 1/2. Functionally, catalyzes the reversible reaction in which hydroxymethyl group from 5,10-methylenetetrahydrofolate is transferred onto alpha-ketoisovalerate to form ketopantoate. This Coxiella burnetii (strain CbuK_Q154) (Coxiella burnetii (strain Q154)) protein is 3-methyl-2-oxobutanoate hydroxymethyltransferase.